A 205-amino-acid chain; its full sequence is Small ribosomal subunit protein uS4 (205 aa).

Positions 18–45 are disordered; sequence NIWGRPKSPVNRREYGPGQHGQRRKGKL. Residues 94-157 enclose the S4 RNA-binding domain; the sequence is RRLDTVVYRA…KQLAFVLEAS (64 aa).

This sequence belongs to the universal ribosomal protein uS4 family. Part of the 30S ribosomal subunit. Contacts protein S5. The interaction surface between S4 and S5 is involved in control of translational fidelity.

Functionally, one of the primary rRNA binding proteins, it binds directly to 16S rRNA where it nucleates assembly of the body of the 30S subunit. In terms of biological role, with S5 and S12 plays an important role in translational accuracy. The chain is Small ribosomal subunit protein uS4 from Rhodopseudomonas palustris (strain BisA53).